Reading from the N-terminus, the 1202-residue chain is Nitric oxide synthase 3 (1202 aa).

A disordered region spans residues 1–70 (MGNLKSVGQE…PPDGPKFPRV (70 aa)). A lipid anchor (N-myristoyl glycine) is attached at glycine 2. S-palmitoyl cysteine attachment occurs at residues cysteine 15 and cysteine 26. The segment covering 15 to 27 (CGLGLGLGLGLCG) has biased composition (gly residues). Positions 33 to 65 (SPAPEPSQAPVPPSPTRPAPDHSPPLTRPPDGP) are enriched in pro residues. Zn(2+)-binding residues include cysteine 93 and cysteine 98. The interaction with NOSIP stretch occupies residues 97–485 (RCLGSLVFPR…PDPWKGSAAK (389 aa)). Serine 101 provides a ligand contact to (6R)-L-erythro-5,6,7,8-tetrahydrobiopterin. A heme b-binding site is contributed by cysteine 183. L-arginine-binding residues include glutamine 246, tryptophan 355, tyrosine 356, and glutamate 360. Residues alanine 445, tryptophan 446, and phenylalanine 459 each contribute to the (6R)-L-erythro-5,6,7,8-tetrahydrobiopterin site. Tyrosine 474 contacts heme b. Residues 489–509 (ITRKKTFKEVANAVKISASLM) form a calmodulin-binding region. A Phosphothreonine; by AMPK modification is found at threonine 494. In terms of domain architecture, Flavodoxin-like spans 519–702 (ATILYGSETG…AFRGWAQAAF (184 aa)). FMN contacts are provided by serine 525, glutamate 526, threonine 527, arginine 529, serine 571, and threonine 572. Residues serine 614, serine 632, and serine 637 each carry the phosphoserine modification. Residues serine 653, cysteine 660, glutamate 686, and glutamine 690 each coordinate FMN. The FAD-binding FR-type domain occupies 755-1001 (RKMFQATILS…IRGAPSFRLP (247 aa)). Residue arginine 775 coordinates NADP(+). FAD is bound at residue histidine 797. The interval 817-843 (EDPPPSTEPVAVEQLEKGSPGGPPPGW) is disordered. Phosphoserine is present on serine 835. Residues arginine 937, tyrosine 939, serine 940, threonine 955, alanine 957, tyrosine 961, valine 974, cysteine 975, and serine 976 each contribute to the FAD site. Residues threonine 1015, arginine 1048, serine 1077, arginine 1078, lysine 1084, tyrosine 1086, and glutamine 1088 each contribute to the NADP(+) site. A Phosphothreonine modification is found at threonine 1174. Serine 1176 bears the Phosphoserine; by AMPK mark. Phosphoserine is present on serine 1178.

It belongs to the NOS family. As to quaternary structure, homodimer. Interacts with NOSIP and NOSTRIN. Interacts with HSP90AB1. Forms a complex with ASL, ASS1 and SLC7A1; the complex regulates cell-autonomous L-arginine synthesis and citrulline recycling while channeling extracellular L-arginine to nitric oxide synthesis pathway. It depends on heme b as a cofactor. The cofactor is FAD. FMN is required as a cofactor. (6R)-L-erythro-5,6,7,8-tetrahydrobiopterin serves as cofactor. In terms of processing, phosphorylation by AMPK at Ser-1176 in the presence of Ca(2+)-calmodulin (CaM) activates activity. In absence of Ca(2+)-calmodulin, AMPK also phosphorylates Thr-494, resulting in inhibition of activity. In terms of tissue distribution, expressed constitutively by vascular endothelium. Detected in alveolar and serosal epithelial cells as well as in endothelial cells in one day old rat. In adult lung, detected in rare endothelial cells.

It localises to the membrane. It is found in the caveola. The protein localises to the cytoplasm. The protein resides in the cytoskeleton. Its subcellular location is the golgi apparatus. It localises to the cell membrane. The catalysed reaction is 2 L-arginine + 3 NADPH + 4 O2 + H(+) = 2 L-citrulline + 2 nitric oxide + 3 NADP(+) + 4 H2O. With respect to regulation, stimulated by calcium/calmodulin. Inhibited by NOSIP and NOSTRIN. Functionally, produces nitric oxide (NO) which is implicated in vascular smooth muscle relaxation through a cGMP-mediated signal transduction pathway. NO mediates vascular endothelial growth factor (VEGF)-induced angiogenesis in coronary vessels and promotes blood clotting through the activation of platelets. This chain is Nitric oxide synthase 3, found in Rattus norvegicus (Rat).